Reading from the N-terminus, the 180-residue chain is Negative modulator of initiation of replication (180 aa).

The segment at 87 to 88 (AV) is interaction with DNA.

The protein belongs to the SeqA family. Homodimer. Polymerizes to form helical filaments.

The protein resides in the cytoplasm. In terms of biological role, negative regulator of replication initiation, which contributes to regulation of DNA replication and ensures that replication initiation occurs exactly once per chromosome per cell cycle. Binds to pairs of hemimethylated GATC sequences in the oriC region, thus preventing assembly of replication proteins and re-initiation at newly replicated origins. Repression is relieved when the region becomes fully methylated. This chain is Negative modulator of initiation of replication, found in Ferrimonas balearica (strain DSM 9799 / CCM 4581 / KCTC 23876 / PAT).